A 725-amino-acid chain; its full sequence is IML2-like protein SCY_3392 (725 aa).

Phosphothreonine is present on Thr-196. Residues Ser-246, Ser-377, and Ser-380 each carry the phosphoserine modification.

It belongs to the IML2 family.

It is found in the cytoplasm. The protein localises to the nucleus. Functionally, may be involved in mitochondrial DNA stability. In Saccharomyces cerevisiae (strain YJM789) (Baker's yeast), this protein is IML2-like protein SCY_3392.